Here is a 354-residue protein sequence, read N- to C-terminus: Probable L-ascorbate-6-phosphate lactonase UlaG (354 aa).

Belongs to the UlaG family. A divalent metal cation is required as a cofactor.

It localises to the cytoplasm. The enzyme catalyses L-ascorbate 6-phosphate + H2O = 3-dehydro-L-gulonate 6-phosphate. Its pathway is cofactor degradation; L-ascorbate degradation; D-xylulose 5-phosphate from L-ascorbate: step 1/4. Probably catalyzes the hydrolysis of L-ascorbate-6-P into 3-keto-L-gulonate-6-P. Is essential for L-ascorbate utilization under anaerobic conditions. This chain is Probable L-ascorbate-6-phosphate lactonase UlaG, found in Escherichia coli O127:H6 (strain E2348/69 / EPEC).